A 466-amino-acid chain; its full sequence is Trigger factor (466 aa).

In terms of domain architecture, PPIase FKBP-type spans 162–243 (GDVVSIDLSA…VRSVKERELP (82 aa)). The disordered stretch occupies residues 428–466 (GNTIDTSEFFGKRVSAGEAEEAEPADEGAARAASDEATT). Residues 457 to 466 (ARAASDEATT) are compositionally biased toward low complexity.

It belongs to the FKBP-type PPIase family. Tig subfamily.

Its subcellular location is the cytoplasm. The catalysed reaction is [protein]-peptidylproline (omega=180) = [protein]-peptidylproline (omega=0). In terms of biological role, involved in protein export. Acts as a chaperone by maintaining the newly synthesized protein in an open conformation. Functions as a peptidyl-prolyl cis-trans isomerase. The polypeptide is Trigger factor (Mycobacterium tuberculosis (strain ATCC 25177 / H37Ra)).